A 202-amino-acid polypeptide reads, in one-letter code: Small ribosomal subunit protein uS4 (202 aa).

Residues 94–157 (SRLDNLVYRM…KDLPIVAAGA (64 aa)) enclose the S4 RNA-binding domain.

The protein belongs to the universal ribosomal protein uS4 family. In terms of assembly, part of the 30S ribosomal subunit. Contacts protein S5. The interaction surface between S4 and S5 is involved in control of translational fidelity.

Functionally, one of the primary rRNA binding proteins, it binds directly to 16S rRNA where it nucleates assembly of the body of the 30S subunit. With S5 and S12 plays an important role in translational accuracy. The chain is Small ribosomal subunit protein uS4 from Malacoplasma penetrans (strain HF-2) (Mycoplasma penetrans).